A 634-amino-acid chain; its full sequence is DNA-directed RNA polymerase subunit gamma (634 aa).

Residues Cys-74, Cys-76, Cys-89, and Cys-92 each contribute to the Zn(2+) site. 3 residues coordinate Mg(2+): Asp-471, Asp-473, and Asp-475.

It belongs to the RNA polymerase beta' chain family. RpoC1 subfamily. In terms of assembly, in cyanobacteria the RNAP catalytic core is composed of 2 alpha, 1 beta, 1 beta', 1 gamma and 1 omega subunit. When a sigma factor is associated with the core the holoenzyme is formed, which can initiate transcription. Mg(2+) is required as a cofactor. It depends on Zn(2+) as a cofactor.

It carries out the reaction RNA(n) + a ribonucleoside 5'-triphosphate = RNA(n+1) + diphosphate. Its function is as follows. DNA-dependent RNA polymerase catalyzes the transcription of DNA into RNA using the four ribonucleoside triphosphates as substrates. This is DNA-directed RNA polymerase subunit gamma from Synechococcus sp. (strain CC9311).